We begin with the raw amino-acid sequence, 221 residues long: Thiamine-phosphate synthase (221 aa).

Residues 41-45 and Asn82 contribute to the 4-amino-2-methyl-5-(diphosphooxymethyl)pyrimidine site; that span reads QLRDK. Mg(2+) is bound by residues Asp83 and Asp102. Ser120 serves as a coordination point for 4-amino-2-methyl-5-(diphosphooxymethyl)pyrimidine. Residue 146 to 148 coordinates 2-[(2R,5Z)-2-carboxy-4-methylthiazol-5(2H)-ylidene]ethyl phosphate; that stretch reads TPT. Lys149 contacts 4-amino-2-methyl-5-(diphosphooxymethyl)pyrimidine. Residue Gly177 coordinates 2-[(2R,5Z)-2-carboxy-4-methylthiazol-5(2H)-ylidene]ethyl phosphate.

This sequence belongs to the thiamine-phosphate synthase family. Mg(2+) is required as a cofactor.

The catalysed reaction is 2-[(2R,5Z)-2-carboxy-4-methylthiazol-5(2H)-ylidene]ethyl phosphate + 4-amino-2-methyl-5-(diphosphooxymethyl)pyrimidine + 2 H(+) = thiamine phosphate + CO2 + diphosphate. It carries out the reaction 2-(2-carboxy-4-methylthiazol-5-yl)ethyl phosphate + 4-amino-2-methyl-5-(diphosphooxymethyl)pyrimidine + 2 H(+) = thiamine phosphate + CO2 + diphosphate. The enzyme catalyses 4-methyl-5-(2-phosphooxyethyl)-thiazole + 4-amino-2-methyl-5-(diphosphooxymethyl)pyrimidine + H(+) = thiamine phosphate + diphosphate. It participates in cofactor biosynthesis; thiamine diphosphate biosynthesis; thiamine phosphate from 4-amino-2-methyl-5-diphosphomethylpyrimidine and 4-methyl-5-(2-phosphoethyl)-thiazole: step 1/1. In terms of biological role, condenses 4-methyl-5-(beta-hydroxyethyl)thiazole monophosphate (THZ-P) and 2-methyl-4-amino-5-hydroxymethyl pyrimidine pyrophosphate (HMP-PP) to form thiamine monophosphate (TMP). This chain is Thiamine-phosphate synthase, found in Mycolicibacterium vanbaalenii (strain DSM 7251 / JCM 13017 / BCRC 16820 / KCTC 9966 / NRRL B-24157 / PYR-1) (Mycobacterium vanbaalenii).